The chain runs to 61 residues: Sec-independent protein translocase protein TatA (61 aa).

The chain crosses the membrane as a helical span at residues 2–22 (GLSGISPLSLLLILAIIVALF).

It belongs to the TatA/E family. The Tat system comprises two distinct complexes: a TatABC complex, containing multiple copies of TatA, TatB and TatC subunits, and a separate TatA complex, containing only TatA subunits. Substrates initially bind to the TatABC complex, which probably triggers association of the separate TatA complex to form the active translocon.

Its subcellular location is the cell inner membrane. Part of the twin-arginine translocation (Tat) system that transports large folded proteins containing a characteristic twin-arginine motif in their signal peptide across membranes. TatA could form the protein-conducting channel of the Tat system. This Legionella pneumophila (strain Corby) protein is Sec-independent protein translocase protein TatA.